The chain runs to 387 residues: Eukaryotic translation initiation factor 3 subunit M (387 aa).

The PCI domain maps to 181–340; it reads RSSKVMIELL…RKVHISSTMH (160 aa).

Belongs to the eIF-3 subunit M family. Component of the eukaryotic translation initiation factor 3 (eIF-3) complex. The eIF-3 complex interacts with pix.

Its subcellular location is the cytoplasm. The protein localises to the golgi apparatus. In terms of biological role, component of the eukaryotic translation initiation factor 3 (eIF-3) complex, which is involved in protein synthesis of a specialized repertoire of mRNAs and, together with other initiation factors, stimulates binding of mRNA and methionyl-tRNAi to the 40S ribosome. The eIF-3 complex specifically targets and initiates translation of a subset of mRNAs involved in cell proliferation. The polypeptide is Eukaryotic translation initiation factor 3 subunit M (Drosophila willistoni (Fruit fly)).